Reading from the N-terminus, the 102-residue chain is MVTEIRSLKQLEEIFSAKKNVIVDFWAAWCGPCKLTSPEFQKAADEFSDAQFVKVNVDDHTDIAAAYNITSLPTIVVFENGVEKKRAIGFMPKTKIIDLFNN.

The region spanning V2 to N102 is the Thioredoxin domain. Cysteines 30 and 33 form a disulfide.

It belongs to the thioredoxin family.

Its function is as follows. Participates in various redox reactions through the reversible oxidation of its active center dithiol to a disulfide and catalyzes dithiol-disulfide exchange reactions. The protein is Thioredoxin (trxA) of Mycoplasma genitalium (strain ATCC 33530 / DSM 19775 / NCTC 10195 / G37) (Mycoplasmoides genitalium).